The following is a 155-amino-acid chain: UPF0178 protein RHE_CH02229 (155 aa).

It belongs to the UPF0178 family.

This Rhizobium etli (strain ATCC 51251 / DSM 11541 / JCM 21823 / NBRC 15573 / CFN 42) protein is UPF0178 protein RHE_CH02229.